Consider the following 858-residue polypeptide: RNA-directed RNA polymerase 2a (858 aa).

Residues 511 to 624 (KHCLEIDLSK…FSVLPPVGDP (114 aa)) enclose the RdRp catalytic domain. The disordered stretch occupies residues 772 to 830 (TKQRKKKDGIERRRDDKRRTPTGSYGGGEEAETKVSQAESTGTRSQKSQREGAFKSQAV). The span at 779–790 (DGIERRRDDKRR) shows a compositional bias: basic and acidic residues. Over residues 805–817 (KVSQAESTGTRSQ) the composition is skewed to polar residues.

This sequence belongs to the ssRNA positive-strand viruses RNA-directed RNA polymerase family. Interacts with replication protein 1a.

It catalyses the reaction RNA(n) + a ribonucleoside 5'-triphosphate = RNA(n+1) + diphosphate. In terms of biological role, RNA-dependent RNA polymerase which replicates the viral genome composed of 3 RNA segments, RNA1, RNA2 and RNA3. The chain is RNA-directed RNA polymerase 2a from Cucumis sativus (Cucumber).